A 138-amino-acid polypeptide reads, in one-letter code: MDKTFHLEVLTPYRKFYEGDVEEIIVTTTTGQIGILKDHIPLTTPIAQAGTLQIKKDGQWKEAFISGGFMEVRRDGVTILSSAAEWPEEIDIARAQAAKERAEEKLRQKKSKQEYIAAEAALKRALMRLKIASKYQEM.

The protein belongs to the ATPase epsilon chain family. F-type ATPases have 2 components, CF(1) - the catalytic core - and CF(0) - the membrane proton channel. CF(1) has five subunits: alpha(3), beta(3), gamma(1), delta(1), epsilon(1). CF(0) has three main subunits: a, b and c.

Its subcellular location is the cell membrane. Produces ATP from ADP in the presence of a proton gradient across the membrane. In Caldanaerobacter subterraneus subsp. tengcongensis (strain DSM 15242 / JCM 11007 / NBRC 100824 / MB4) (Thermoanaerobacter tengcongensis), this protein is ATP synthase epsilon chain.